Here is a 217-residue protein sequence, read N- to C-terminus: Eukaryotic translation initiation factor 4E (217 aa).

Positions 1-11 are enriched in low complexity; it reads MATVEPETTPT. Residues 1-27 are disordered; sequence MATVEPETTPTTNPPPAEEEKTESNQE. Ala2 carries the N-acetylalanine modification. Phosphothreonine is present on Thr22. Positions 37 to 40 are EIF4EBP1/2/3 binding; the sequence is HPLQ. Residue 56-57 participates in mRNA binding; that stretch reads WQ. The interval 73-77 is EIF4EBP1/2/3 binding; that stretch reads WALYN. 102-103 contributes to the mRNA binding site; it reads WE. The EIF4EBP1/2/3 binding stretch occupies residues 132-139; it reads ETLLCLIG. MRNA-binding positions include 157–162 and 205–207; these read RAKGDK and TKS. The residue at position 209 (Ser209) is a Phosphoserine; by PKC and MKNK2.

The protein belongs to the eukaryotic initiation factor 4E family. In terms of assembly, eIF4F is a multi-subunit complex, the composition of which varies with external and internal environmental conditions. It is composed of at least EIF4A, EIF4E and EIF4G1/EIF4G3. EIF4E is also known to interact with other partners. Interacts with EIF4ENIF1/4E-T; promotes recruitment to P-bodies and import into the nucleus. Hypophosphorylated EIF4EBP1, EIF4EBP2 and EIF4EBP3 compete with EIF4G1/EIF4G3 to interact with EIF4E; insulin stimulated MAP-kinase (MAPK1 and MAPK3) phosphorylation of EIF4EBP1 causes dissociation of the complex allowing EIF4G1/EIF4G3 to bind and consequent initiation of translation. Interacts mutually exclusive with EIF4A1 or EIF4A2. Interacts with NGDN and PIWIL2. Component of the CYFIP1-EIF4E-FMR1 complex composed of CYFIP, EIF4E and FMR1. Interacts directly with CYFIP1. Interacts with CLOCK. Binds to MKNK2 in nucleus. Interacts with LIMD1, WTIP and AJUBA. Interacts with APOBEC3G in an RNA-dependent manner. Interacts with LARP1. Interacts with METTL3. Interacts with RBM24; this interaction prevents EIF4E from binding to p53/TP53 mRNA and inhibits the assembly of translation initiation complex. Interacts with DDX3X; interaction is direct and in an RNA-independent manner; this interaction enhances EIF4E cap-binding ability and is required for the repression of cap-dependent translation and the increase of IRES-mediated translation. DDX3X competes with EIF4G1 for interaction with EIF4E. Interacts with EIF4G1; which in a mutual exclusive interaction associates either with EIF1 or with EIF4E on a common binding site. Interacts with BTG4 and CNOT7. Interacts with LRPPRC (via N-terminus); the interaction promotes association of EIF4E with 4ESE-containing mRNAs. Interacts with mRNA cleavage enzyme CPSF3 and its cofactor CPSF1. Interacts (via RING-type zinc finger) with PML; the interaction results in conformational changes of both interacting proteins and reduces EIF4E affinity for the 5' m7G cap of mRNA, thus reducing EIF4E-mediated mRNA nuclear export. Interacts with homeobox protein HHEX/PRH; the interaction inhibits EIF4E-mediated mRNA nuclear export. Interacts with homeobox protein HOXA9; the interaction positively regulates EIF4E-mediated mRNA nuclear export. Interacts with homeobox protein EMX2. As to quaternary structure, (Microbial infection) Interacts with murine norovirus viral genome-linked protein; this interaction plays a role in translation of viral proteins. Phosphorylation increases the ability of the protein to bind to mRNA caps and to form the eIF4F complex. Phosphorylation also enhances its mRNA transport function. Phosphorylation at Ser-209 is not essential for protein synthesis.

It is found in the cytoplasm. The protein resides in the P-body. The protein localises to the stress granule. Its subcellular location is the nucleus. It localises to the nucleus speckle. It is found in the nuclear body. In terms of biological role, acts in the cytoplasm to initiate and regulate protein synthesis and is required in the nucleus for export of a subset of mRNAs from the nucleus to the cytoplasm which promotes processes such as RNA capping, processing and splicing. Component of the protein complex eIF4F, which is involved in the recognition of the mRNA cap, ATP-dependent unwinding of 5'-terminal secondary structure and recruitment of mRNA to the ribosome. This protein recognizes and binds the 7-methylguanosine (m7G)-containing mRNA cap during an early step in the initiation of protein synthesis and facilitates ribosome binding by inducing the unwinding of the mRNAs secondary structures. Together with EIF4G1, antagonizes the scanning promoted by EIF1-EIF4G1 and is required for TISU translation, a process where the TISU element recognition makes scanning unnecessary. In addition to its role in translation initiation, also acts as a regulator of translation and stability in the cytoplasm. Component of the CYFIP1-EIF4E-FMR1 complex which binds to the mRNA cap and mediates translational repression: in the complex, EIF4E mediates the binding to the mRNA cap. Component of a multiprotein complex that sequesters and represses translation of proneurogenic factors during neurogenesis. In P-bodies, component of a complex that mediates the storage of translationally inactive mRNAs in the cytoplasm and prevents their degradation. May play an important role in spermatogenesis through translational regulation of stage-specific mRNAs during germ cell development. As well as its roles in translation, also involved in mRNA nucleocytoplasmic transport. Its role in mRNA export from the nucleus to the cytoplasm relies on its ability to bind the m7G cap of RNAs and on the presence of the 50-nucleotide EIF4E sensitivity element (4ESE) in the 3'UTR of sensitive transcripts. Interaction with the 4ESE is mediated by LRPPRC which binds simultaneously to both EIF4E and the 4ESE, thereby acting as a platform for assembly for the RNA export complex. EIF4E-dependent mRNA export is independent of ongoing protein or RNA synthesis and is also NFX1-independent but is XPO1-dependent with LRPPRC interacting with XPO1 to form an EIF4E-dependent mRNA export complex. Alters the composition of the cytoplasmic face of the nuclear pore to promote RNA export by reducing RANBP2 expression, relocalizing nucleoporin NUP214 and increasing expression of RANBP1 and RNA export factors DDX19 and GLE1. Promotes the nuclear export of cyclin CCND1 mRNA. Promotes the nuclear export of NOS2/iNOS mRNA. Promotes the nuclear export of MDM2 mRNA. Also promotes the export of additional mRNAs, including others involved in the cell cycle. In the nucleus, binds to capped splice factor-encoding mRNAs and stimulates their nuclear export to enhance splice factor production by increasing their cytoplasmic availability to the translation machinery. May also regulate splicing through interaction with the spliceosome in an RNA and m7G cap-dependent manner. Also binds to some pre-mRNAs and may play a role in their recruitment to the spliceosome. Promotes steady-state capping of a subset of coding and non-coding RNAs by mediating nuclear export of capping machinery mRNAs including RNMT, RNGTT and RAMAC to enhance their translation. Stimulates mRNA 3'-end processing by promoting the expression of several core cleavage complex factors required for mRNA cleavage and polyadenylation, and may also have a direct effect through its interaction with the CPSF3 cleavage enzyme. Rescues cells from apoptosis by promoting activation of serine/threonine-protein kinase AKT1 through mRNA export of NBS1 which potentiates AKT1 phosphorylation and also through mRNA export of AKT1 effectors, allowing for increased production of these proteins. The polypeptide is Eukaryotic translation initiation factor 4E (Mus musculus (Mouse)).